The following is a 279-amino-acid chain: Acyl-[acyl-carrier-protein]--UDP-N-acetylglucosamine O-acyltransferase (279 aa).

Belongs to the transferase hexapeptide repeat family. LpxA subfamily. As to quaternary structure, homotrimer.

The protein localises to the cytoplasm. The enzyme catalyses a (3R)-hydroxyacyl-[ACP] + UDP-N-acetyl-alpha-D-glucosamine = a UDP-3-O-[(3R)-3-hydroxyacyl]-N-acetyl-alpha-D-glucosamine + holo-[ACP]. Its pathway is glycolipid biosynthesis; lipid IV(A) biosynthesis; lipid IV(A) from (3R)-3-hydroxytetradecanoyl-[acyl-carrier-protein] and UDP-N-acetyl-alpha-D-glucosamine: step 1/6. In terms of biological role, involved in the biosynthesis of lipid A, a phosphorylated glycolipid that anchors the lipopolysaccharide to the outer membrane of the cell. The sequence is that of Acyl-[acyl-carrier-protein]--UDP-N-acetylglucosamine O-acyltransferase from Chlamydia pneumoniae (Chlamydophila pneumoniae).